We begin with the raw amino-acid sequence, 310 residues long: MVAVVRTQDLLDNFNLTLVSGEDGIQREIITSDISRPGIEMTGYFRYYPKERLQLIGKTEMAYFLDLSSEQRRDRAERLCTDITPGIVVSRGMDIPEELKEASEKSGVPILQSPRKTTRVISRLTNYLESKFAPFTAIHGVLVDIYGVGVLIIGQSGVGKSETALELVKRGHRLVADDNVEIRQEDYDSLIGNAPPLIEHLLEIRGLGIINVMTLFGAGSVRSKKRISLVINLENWDEKKQYDRLGLDEDMMKVMDVHLPKATVPVRPGRNLAVIIEVAAMNFRLKRMGVNTAEEFSERLSTMIEKGELE.

Catalysis depends on residues histidine 139 and lysine 160. ATP is bound at residue 154–161 (GQSGVGKS). Residue serine 161 coordinates Mg(2+). Aspartate 178 acts as the Proton acceptor; for phosphorylation activity. Proton donor; for dephosphorylation activity in catalysis. The interval 202 to 211 (LEIRGLGIIN) is important for the catalytic mechanism of both phosphorylation and dephosphorylation. Glutamate 203 is a binding site for Mg(2+). Arginine 244 is an active-site residue. An important for the catalytic mechanism of dephosphorylation region spans residues 265 to 270 (PVRPGR).

This sequence belongs to the HPrK/P family. Homohexamer. The cofactor is Mg(2+).

The catalysed reaction is [HPr protein]-L-serine + ATP = [HPr protein]-O-phospho-L-serine + ADP + H(+). It carries out the reaction [HPr protein]-O-phospho-L-serine + phosphate + H(+) = [HPr protein]-L-serine + diphosphate. Its function is as follows. Catalyzes the ATP- as well as the pyrophosphate-dependent phosphorylation of a specific serine residue in HPr, a phosphocarrier protein of the phosphoenolpyruvate-dependent sugar phosphotransferase system (PTS). HprK/P also catalyzes the pyrophosphate-producing, inorganic phosphate-dependent dephosphorylation (phosphorolysis) of seryl-phosphorylated HPr (P-Ser-HPr). The two antagonistic activities of HprK/P are regulated by several intracellular metabolites, which change their concentration in response to the absence or presence of rapidly metabolisable carbon sources (glucose, fructose, etc.) in the growth medium. Also phosphorylates/dephosphorylates the HPr-like catabolite repression protein crh on a specific serine residue. Therefore, by controlling the phosphorylation state of HPr and crh, HPrK/P is a sensor enzyme that plays a major role in the regulation of carbon metabolism and sugar transport: it mediates carbon catabolite repression (CCR), and regulates PTS-catalyzed carbohydrate uptake and inducer exclusion. This chain is HPr kinase/phosphorylase 1 (hprK1), found in Oceanobacillus iheyensis (strain DSM 14371 / CIP 107618 / JCM 11309 / KCTC 3954 / HTE831).